The following is a 327-amino-acid chain: Cytochrome c biogenesis protein CcsA (327 aa).

The next 8 membrane-spanning stretches (helical) occupy residues 13–33 (ISFS…LVNL), 46–66 (GIII…IYSG), 73–93 (LYES…VSYF), 101–121 (LNAI…SGLL), 145–165 (MILG…LLVI), 233–253 (IISL…VWAN), 262–282 (WDPK…YLHI), and 294–314 (AIVA…VNLL).

Belongs to the CcmF/CycK/Ccl1/NrfE/CcsA family. In terms of assembly, may interact with Ccs1.

The protein localises to the plastid. Its subcellular location is the chloroplast thylakoid membrane. Functionally, required during biogenesis of c-type cytochromes (cytochrome c6 and cytochrome f) at the step of heme attachment. This is Cytochrome c biogenesis protein CcsA from Lobularia maritima (Sweet alyssum).